The sequence spans 158 residues: NAD(P)H-quinone oxidoreductase subunit N (158 aa).

The protein belongs to the complex I NdhN subunit family. NDH-1 can be composed of about 15 different subunits; different subcomplexes with different compositions have been identified which probably have different functions.

It localises to the cellular thylakoid membrane. The enzyme catalyses a plastoquinone + NADH + (n+1) H(+)(in) = a plastoquinol + NAD(+) + n H(+)(out). The catalysed reaction is a plastoquinone + NADPH + (n+1) H(+)(in) = a plastoquinol + NADP(+) + n H(+)(out). Its function is as follows. NDH-1 shuttles electrons from an unknown electron donor, via FMN and iron-sulfur (Fe-S) centers, to quinones in the respiratory and/or the photosynthetic chain. The immediate electron acceptor for the enzyme in this species is believed to be plastoquinone. Couples the redox reaction to proton translocation, and thus conserves the redox energy in a proton gradient. Cyanobacterial NDH-1 also plays a role in inorganic carbon-concentration. The protein is NAD(P)H-quinone oxidoreductase subunit N of Gloeothece citriformis (strain PCC 7424) (Cyanothece sp. (strain PCC 7424)).